Here is a 421-residue protein sequence, read N- to C-terminus: UDP-N-acetylglucosamine 1-carboxyvinyltransferase (421 aa).

K22–N23 contacts phosphoenolpyruvate. R93 contacts UDP-N-acetyl-alpha-D-glucosamine. C117 (proton donor) is an active-site residue. Position 117 is a 2-(S-cysteinyl)pyruvic acid O-phosphothioketal (C117). Residues R122–L126, D308, and V330 each bind UDP-N-acetyl-alpha-D-glucosamine.

This sequence belongs to the EPSP synthase family. MurA subfamily.

Its subcellular location is the cytoplasm. It carries out the reaction phosphoenolpyruvate + UDP-N-acetyl-alpha-D-glucosamine = UDP-N-acetyl-3-O-(1-carboxyvinyl)-alpha-D-glucosamine + phosphate. Its pathway is cell wall biogenesis; peptidoglycan biosynthesis. Functionally, cell wall formation. Adds enolpyruvyl to UDP-N-acetylglucosamine. This chain is UDP-N-acetylglucosamine 1-carboxyvinyltransferase, found in Pseudomonas aeruginosa (strain LESB58).